The chain runs to 424 residues: Serine--tRNA ligase (424 aa).

232 to 234 provides a ligand contact to L-serine; the sequence is TAE. 263-265 contributes to the ATP binding site; that stretch reads RQE. Position 286 (E286) interacts with L-serine. 350–353 provides a ligand contact to ATP; the sequence is EIGS. S386 serves as a coordination point for L-serine.

This sequence belongs to the class-II aminoacyl-tRNA synthetase family. Type-1 seryl-tRNA synthetase subfamily. As to quaternary structure, homodimer. The tRNA molecule binds across the dimer.

The protein localises to the cytoplasm. The enzyme catalyses tRNA(Ser) + L-serine + ATP = L-seryl-tRNA(Ser) + AMP + diphosphate + H(+). It carries out the reaction tRNA(Sec) + L-serine + ATP = L-seryl-tRNA(Sec) + AMP + diphosphate + H(+). The protein operates within aminoacyl-tRNA biosynthesis; selenocysteinyl-tRNA(Sec) biosynthesis; L-seryl-tRNA(Sec) from L-serine and tRNA(Sec): step 1/1. Its function is as follows. Catalyzes the attachment of serine to tRNA(Ser). Is also able to aminoacylate tRNA(Sec) with serine, to form the misacylated tRNA L-seryl-tRNA(Sec), which will be further converted into selenocysteinyl-tRNA(Sec). The protein is Serine--tRNA ligase of Aster yellows witches'-broom phytoplasma (strain AYWB).